An 85-amino-acid chain; its full sequence is Probable oxaloacetate decarboxylase gamma chain (85 aa).

The chain crosses the membrane as a helical span at residues Ala11–Val33.

It belongs to the OadG family. As to quaternary structure, heterotrimer of an alpha, a beta and a gamma subunit. Na(+) serves as cofactor.

Its subcellular location is the cell membrane. The enzyme catalyses oxaloacetate + 2 Na(+)(in) + H(+) = pyruvate + 2 Na(+)(out) + CO2. Catalyzes the decarboxylation of oxaloacetate coupled to Na(+) translocation. The protein is Probable oxaloacetate decarboxylase gamma chain of Vibrio parahaemolyticus serotype O3:K6 (strain RIMD 2210633).